The sequence spans 364 residues: 3-isopropylmalate dehydrogenase (364 aa).

NAD(+) is bound at residue 78-91 (GKKWDYLSIDKRPE). R99, R109, R138, and D227 together coordinate substrate. D227, D251, and D255 together coordinate Mg(2+). Residue 285–297 (GSAPDIAGKNIAN) participates in NAD(+) binding.

The protein belongs to the isocitrate and isopropylmalate dehydrogenases family. LeuB type 1 subfamily. Homodimer. Requires Mg(2+) as cofactor. Mn(2+) is required as a cofactor.

It localises to the cytoplasm. The catalysed reaction is (2R,3S)-3-isopropylmalate + NAD(+) = 4-methyl-2-oxopentanoate + CO2 + NADH. It participates in amino-acid biosynthesis; L-leucine biosynthesis; L-leucine from 3-methyl-2-oxobutanoate: step 3/4. Its function is as follows. Catalyzes the oxidation of 3-carboxy-2-hydroxy-4-methylpentanoate (3-isopropylmalate) to 3-carboxy-4-methyl-2-oxopentanoate. The product decarboxylates to 4-methyl-2 oxopentanoate. The polypeptide is 3-isopropylmalate dehydrogenase (Buchnera aphidicola subsp. Uroleucon erigeronensis).